The primary structure comprises 332 residues: Phenylalanine--tRNA ligase alpha subunit (332 aa).

Glutamate 254 provides a ligand contact to Mg(2+).

The protein belongs to the class-II aminoacyl-tRNA synthetase family. Phe-tRNA synthetase alpha subunit type 1 subfamily. Tetramer of two alpha and two beta subunits. The cofactor is Mg(2+).

Its subcellular location is the cytoplasm. The catalysed reaction is tRNA(Phe) + L-phenylalanine + ATP = L-phenylalanyl-tRNA(Phe) + AMP + diphosphate + H(+). This Hydrogenovibrio crunogenus (strain DSM 25203 / XCL-2) (Thiomicrospira crunogena) protein is Phenylalanine--tRNA ligase alpha subunit.